The chain runs to 77 residues: MLKKVVAAAAATGGLVLAGAGMAVADSGAQGAAVHSPGVLSGNVVQVPVHVPVNVCGNTISVIGLLNPAFGNVCINK.

The N-terminal stretch at M1–A25 is a signal peptide. Residues S36–N76 enclose the Chaplin domain. Forms amyloid fibrils in vitro regions lie at residues G38–N54 and G57–N72. Residues C56 and C74 are joined by a disulfide bond.

This sequence belongs to the chaplin family. Short chaplin subfamily. Homodimer; disulfide linked. About 10% of ChpH isolated from cell wall forms disulfide-bonded homodimers.

The protein resides in the cell surface. It localises to the secreted. Its subcellular location is the cell wall. It is found in the fimbrium. One of 8 partially redundant surface-active proteins required for efficient formation of aerial mycelium; the short chaplins assemble into a hydrophobic, amyloidal fibrillar surface layer that envelopes and protects aerial hyphae and spores, presumably anchored to the long chaplins. Chaplins have an overlapping function with the surface-active SapB peptide; chaplins are essential on minimal medium while on rich medium both chaplins and SapB are required for efficient aerial hyphae formation. Chaplins are also involved in cell attachment to a hydrophobic surface. Forms amyloid fibrils in vitro probably composed of stacked beta-sheets. A small chaplin extract (ChpD, ChpE, ChpF, ChpG and ChpH) self-assembles into 2 different amyloids; small fibrils at the air-water interface form an amphipathic membrane that resembles spore-surface structures involved in aerial hyphae formation, and hydrophilic fibrils in solution that resemble the fibers that attach cells to a hydrophobic surface. At the air-water interface the hydrophilic surface is in contact with water (probably equivalent to the peptidoglycan layer), while the hydrophobic face is exposed to the air, making the surface of the aerial hyphae hydrophobic. A minimal chaplin strain capable of forming aerial mycelium/hyphae on minimal medium contains ChpC, ChpE and ChpH. The strain also has restored rodlet formation on the hyphae surface. A small chaplin extract applied to a chaplin-deficient strain restores aerial hyphae formation. The small chaplin extract forms an amyloid-like structure similar to that seen on the surface of cells without rodlets (rdlA-rdlB deletions), and is highly surface active, reducing surface tension from 72 to 26 mJ/m(2), which probably allows escape of hyphae from an aqueous environment into air. The chain is Chaplin-H from Streptomyces coelicolor (strain ATCC BAA-471 / A3(2) / M145).